Consider the following 697-residue polypeptide: Potassium channel KAT2 (697 aa).

Over 1–63 (MSISCTRNFF…PFDPRFRGWE (63 aa)) the chain is Cytoplasmic. A helical transmembrane segment spans residues 64 to 84 (MWLVILVIYSAWICPFEFAFI). The Extracellular portion of the chain corresponds to 85–91 (TYKKDAL). A helical membrane pass occupies residues 92-112 (FIIDNIVNGFFAIDIILTFFV). Residues 113-134 (AYLDSHSYLLVDKPKKIAIRYL) lie on the Cytoplasmic side of the membrane. A helical membrane pass occupies residues 135–155 (STWFAFDVCSTAPFQSLSLLF). Over 156–165 (KYNGSEIGFR) the chain is Extracellular. A glycan (N-linked (GlcNAc...) asparagine) is linked at Asn158. A helical; Voltage-sensor transmembrane segment spans residues 166 to 186 (VLSMLRLWRLRRVSSLFARLE). Residues 187-200 (KDIRFNYFWTRCTK) lie on the Cytoplasmic side of the membrane. Residues 201 to 221 (LISVTLFAVHCAGCFAYLIAD) traverse the membrane as a helical segment. Residues 222 to 248 (QYHDPTKTWIGAVYPNFKETSVWSRYV) lie on the Extracellular side of the membrane. An intramembrane region (pore-forming) is located at residues 249–268 (TALYWSITTLTTTGYGDLHA). Residues 269–272 (ENPR) are Extracellular-facing. Residues 273–293 (EMLFFVFFMLFNLGFTSYLIG) traverse the membrane as a helical segment. Over 294 to 697 (NMTNLVVHWT…HLYILINENS (404 aa)) the chain is Cytoplasmic. Residue 377–496 (LFHGVSRNFL…RVIMNNLFMK (120 aa)) coordinates a nucleoside 3',5'-cyclic phosphate. A KHA domain is found at 629–697 (RVTIHLKSRD…HLYILINENS (69 aa)).

The protein belongs to the potassium channel family. Plant (TC 1.A.1.4) subfamily. In terms of assembly, the potassium channel is probably composed of a homo- or heterotetrameric complex of pore-forming subunits. May interact with KAT1. Interacts with SLAC1. As to expression, expressed in guard cells of hypocotyls, stems leaves and petioles. Detected also in the phloem of minor veins and in flower at a lower level.

It localises to the membrane. Functionally, highly selective inward-rectifying potassium channel. This voltage-dependent channel could mediate long-term potassium influx into guard cells leading to stomatal opening. Assuming opened or closed conformations in response to the voltage difference across the membrane, the channel is activated by hyperpolarization. The channel activity is enhanced upon external acidification. The protein is Potassium channel KAT2 (KAT2) of Arabidopsis thaliana (Mouse-ear cress).